An 862-amino-acid chain; its full sequence is MEVTSCLTLKDLISTKKNKSDPVADGRSAQKENMFDRFKISPRLPLRSEPIDLSKQKSFTPERIPVTPVKVAERPQADPWTPTANLKMLISAASPEIRDREKKKELFRPIENNGIEETDTDLQLMDSVDDIDDLEKRPSRKQKSLGLLCQKFLARYPSYPISTEKMTISLDEAASSLGVERRRIYDIVNVLESLHLVSRVAKNQYCWHGQHNLNETLRNLQHIGEKQNYRAQIACFNLRDMGMEYKCDEQEKGCHIDHLNTPLIELSEADCPSVSSSSRKDKSLRIMSQKFVMLFLVSTTKIITLEIAAKILIEESQDAADHSKFKTKVRRLYDIANVLTSLGLIKKVHVTDERGRKPAFKWIGPVDFTAEDQKMEVTTTIPSPDSKKDACNLSPASDRVKQRLFRHSSFNIVQSFSAVKRKVCSHPCSPQKPQGVESSDSYASKMAHLATICKPKAEEDSKNGNIENSSLPFSVVVPMPVDSDYRVKPVVHQVPLVSHKTVCEPLGIMPPSQSNEDCTNHGFVPNQPYMYLPSNSVFMLCGNLSEGKATDHLAMSLYPVPGSDSPTLEETTMSKQERPTKRQLNDKDDAPLSLVLPKKSRVDNTQSLQKPICKTTTPEQLQHVSREEEYNTEPVTKHSNVGETTEEVGSRILPHENVHLHPAVPPQFLYVPTTQGLNSFNFLLPANHSAGLSQSQLASLNVPYVMVPSSALTAFPFICSPAVSSGASGSTLNGRMNFSQAGTSSPTRLIIGAPQMAVPQPPEPAVDQTKNLSPLSVSPVSAKCASSKADSHDSLSQSIHTAKLHKSPTPSTPKSIRPLHKDAFFKTPGSLDVSSSRKPQRTQTRTSSSAQRKLDIDSSAGN.

2 consecutive DNA-binding regions follow at residues 140 to 209 (RKQK…CWHG) and 279 to 364 (RKDK…KWIG). Disordered regions lie at residues 561–592 (PGSD…DAPL), 617–643 (TPEQ…NVGE), and 788–862 (KADS…SAGN). Positions 564 to 574 (DSPTLEETTMS) are enriched in polar residues. A compositionally biased stretch (basic and acidic residues) spans 575–590 (KQERPTKRQLNDKDDA). Polar residues-rich tracts occupy residues 633–643 (EPVTKHSNVGE) and 832–851 (DVSS…SSAQ).

It belongs to the E2F/DP family. Homodimer and heterodimer: mainly forms homodimers and, to a lesser extent, heterodimers with e2f8.

The protein localises to the nucleus. Atypical E2F transcription factor that participates in various processes such as angiogenesis and polyploidization of specialized cells. Mainly acts as a transcription repressor that binds DNA independently of DP proteins and specifically recognizes the E2 recognition site 5'-TTTC[CG]CGC-3'. Directly represses transcription of classical E2F transcription factors such as e2f1. Acts as a regulator of S-phase by recognizing and binding the E2-related site 5'-TTCCCGCC-3' and mediating repression of G1/S-regulated genes. Acts as a promoter of sprouting angiogenesis, possibly by acting as a transcription activator. This chain is Transcription factor E2F7 (e2f7), found in Xenopus tropicalis (Western clawed frog).